A 316-amino-acid polypeptide reads, in one-letter code: Phosphatidylglycerol--prolipoprotein diacylglyceryl transferase (316 aa).

The next 3 membrane-spanning stretches (helical) occupy residues 18–38 (PIPI…AIWL), 47–67 (GGNP…GIIG), and 95–115 (NGGL…AVFF). Residue Arg141 participates in a 1,2-diacyl-sn-glycero-3-phospho-(1'-sn-glycerol) binding. 2 helical membrane passes run 188-208 (VHPT…LLMW) and 251-271 (INTI…FLLK). Residues 292–316 (AVASPDGKPLPKAGEGIDGETPSTR) are disordered.

Belongs to the Lgt family.

It is found in the cell membrane. It carries out the reaction L-cysteinyl-[prolipoprotein] + a 1,2-diacyl-sn-glycero-3-phospho-(1'-sn-glycerol) = an S-1,2-diacyl-sn-glyceryl-L-cysteinyl-[prolipoprotein] + sn-glycerol 1-phosphate + H(+). It participates in protein modification; lipoprotein biosynthesis (diacylglyceryl transfer). Catalyzes the transfer of the diacylglyceryl group from phosphatidylglycerol to the sulfhydryl group of the N-terminal cysteine of a prolipoprotein, the first step in the formation of mature lipoproteins. The polypeptide is Phosphatidylglycerol--prolipoprotein diacylglyceryl transferase (Corynebacterium glutamicum (strain ATCC 13032 / DSM 20300 / JCM 1318 / BCRC 11384 / CCUG 27702 / LMG 3730 / NBRC 12168 / NCIMB 10025 / NRRL B-2784 / 534)).